Consider the following 63-residue polypeptide: 2-hydroxymuconate tautomerase (63 aa).

Proline 2 (proton acceptor; via imino nitrogen) is an active-site residue.

Belongs to the 4-oxalocrotonate tautomerase family. Homohexamer.

The enzyme catalyses (2Z,4E)-2-hydroxyhexa-2,4-dienedioate = (3E)-2-oxohex-3-enedioate. The protein operates within aromatic compound metabolism; salicylate degradation. Its function is as follows. Catalyzes the ketonization of 2-hydroxymuconate stereoselectively to yield 2-oxo-3-hexenedioate. The protein is 2-hydroxymuconate tautomerase (nahJ) of Pseudomonas fluorescens.